The sequence spans 214 residues: Protein-L-isoaspartate O-methyltransferase (214 aa).

The active site involves Ser61.

It belongs to the methyltransferase superfamily. L-isoaspartyl/D-aspartyl protein methyltransferase family.

It localises to the cytoplasm. It carries out the reaction [protein]-L-isoaspartate + S-adenosyl-L-methionine = [protein]-L-isoaspartate alpha-methyl ester + S-adenosyl-L-homocysteine. Its function is as follows. Catalyzes the methyl esterification of L-isoaspartyl residues in peptides and proteins that result from spontaneous decomposition of normal L-aspartyl and L-asparaginyl residues. It plays a role in the repair and/or degradation of damaged proteins. The chain is Protein-L-isoaspartate O-methyltransferase from Paramagnetospirillum magneticum (strain ATCC 700264 / AMB-1) (Magnetospirillum magneticum).